A 337-amino-acid chain; its full sequence is Ornithine carbamoyltransferase, catabolic (337 aa).

Carbamoyl phosphate is bound by residues 57 to 60 (STRT), glutamine 84, arginine 108, and 135 to 138 (HPTQ). Residues asparagine 167, aspartate 231, and 235–236 (SM) contribute to the L-ornithine site. Carbamoyl phosphate contacts are provided by residues 272–273 (CL) and arginine 317.

It belongs to the aspartate/ornithine carbamoyltransferase superfamily. OTCase family.

The protein resides in the cytoplasm. The enzyme catalyses carbamoyl phosphate + L-ornithine = L-citrulline + phosphate + H(+). The protein operates within amino-acid degradation; L-arginine degradation via ADI pathway; carbamoyl phosphate from L-arginine: step 2/2. Reversibly catalyzes the transfer of the carbamoyl group from carbamoyl phosphate (CP) to the N(epsilon) atom of ornithine (ORN) to produce L-citrulline. The chain is Ornithine carbamoyltransferase, catabolic from Streptococcus ratti.